Reading from the N-terminus, the 69-residue chain is DNA gyrase inhibitor YacG (69 aa).

The Zn(2+) site is built by Cys-7, Cys-10, Cys-26, and Cys-30.

This sequence belongs to the DNA gyrase inhibitor YacG family. In terms of assembly, interacts with GyrB. Requires Zn(2+) as cofactor.

Inhibits all the catalytic activities of DNA gyrase by preventing its interaction with DNA. Acts by binding directly to the C-terminal domain of GyrB, which probably disrupts DNA binding by the gyrase. The protein is DNA gyrase inhibitor YacG of Shewanella baltica (strain OS195).